Consider the following 309-residue polypeptide: Probable inactive poly [ADP-ribose] polymerase SRO5 (309 aa).

The PARP catalytic domain maps to 28 to 255 (CDSSSDRSFA…AFPVLIKALS (228 aa)). The region spanning 238–309 (KRLRSPWMAF…IKACGHKVQH (72 aa)) is the RST domain.

In terms of assembly, interacts with dehydration-responsive DREB2 proteins and a number of transcription factors belonging to several protein families.

The protein localises to the nucleus matrix. Probable inactive ADP-ribosyltransferase that may be involved in stress and developmental responses. This chain is Probable inactive poly [ADP-ribose] polymerase SRO5 (SRO5), found in Arabidopsis thaliana (Mouse-ear cress).